A 192-amino-acid chain; its full sequence is Transcription termination/antitermination protein NusG (192 aa).

In terms of domain architecture, KOW spans 140-168; the sequence is VGEIVTVTDGPFETFMGTVEEIDQEKNRL.

It belongs to the NusG family.

Participates in transcription elongation, termination and antitermination. The sequence is that of Transcription termination/antitermination protein NusG from Rickettsia conorii (strain ATCC VR-613 / Malish 7).